The primary structure comprises 41 residues: Hemoglobin subunit beta (41 aa).

Residues Leu-1–His-41 enclose the Globin domain. Residue Lys-39 is modified to N6-acetyllysine.

This sequence belongs to the globin family. As to quaternary structure, heterotetramer of two alpha chains and two beta chains. In terms of tissue distribution, red blood cells.

Its function is as follows. Involved in oxygen transport from the lung to the various peripheral tissues. This chain is Hemoglobin subunit beta (HBB), found in Colobus guereza (Mantled guereza).